We begin with the raw amino-acid sequence, 155 residues long: Ribonuclease H (155 aa).

The RNase H type-1 domain maps to 1 to 142 (MLKQVEIFTD…CDELARNAAG (142 aa)). Asp-10, Glu-48, Asp-70, and Asp-134 together coordinate Mg(2+).

It belongs to the RNase H family. In terms of assembly, monomer. The cofactor is Mg(2+).

It is found in the cytoplasm. It catalyses the reaction Endonucleolytic cleavage to 5'-phosphomonoester.. Functionally, endonuclease that specifically degrades the RNA of RNA-DNA hybrids. The chain is Ribonuclease H from Erwinia tasmaniensis (strain DSM 17950 / CFBP 7177 / CIP 109463 / NCPPB 4357 / Et1/99).